Reading from the N-terminus, the 750-residue chain is Ribosomal RNA large subunit methyltransferase K/L (750 aa).

The THUMP domain maps to 46 to 157 (TAYRLCLWSR…RGEAILSLDL (112 aa)).

The protein belongs to the methyltransferase superfamily. RlmKL family.

It is found in the cytoplasm. The catalysed reaction is guanosine(2445) in 23S rRNA + S-adenosyl-L-methionine = N(2)-methylguanosine(2445) in 23S rRNA + S-adenosyl-L-homocysteine + H(+). It catalyses the reaction guanosine(2069) in 23S rRNA + S-adenosyl-L-methionine = N(2)-methylguanosine(2069) in 23S rRNA + S-adenosyl-L-homocysteine + H(+). In terms of biological role, specifically methylates the guanine in position 2445 (m2G2445) and the guanine in position 2069 (m7G2069) of 23S rRNA. The polypeptide is Ribosomal RNA large subunit methyltransferase K/L (Pseudomonas savastanoi pv. phaseolicola (strain 1448A / Race 6) (Pseudomonas syringae pv. phaseolicola (strain 1448A / Race 6))).